Reading from the N-terminus, the 479-residue chain is Catalase easC (479 aa).

Positions 1-13 are enriched in polar residues; that stretch reads MASQVSLTAQGSG. A disordered region spans residues 1–28; the sequence is MASQVSLTAQGSGLSAPLNGPEHLTSTT. His-53 is an active-site residue. Tyr-343 is a heme binding site. The tract at residues 365–385 is disordered; it reads HAANDAPKTKKPAVPLQKQSR.

The protein belongs to the catalase family. Requires heme as cofactor.

It participates in alkaloid biosynthesis; ergot alkaloid biosynthesis. Its function is as follows. Catalase; part of the gene cluster that mediates the biosynthesis of fungal ergot alkaloid. DmaW catalyzes the first step of ergot alkaloid biosynthesis by condensing dimethylallyl diphosphate (DMAP) and tryptophan to form 4-dimethylallyl-L-tryptophan. The second step is catalyzed by the methyltransferase easF that methylates 4-dimethylallyl-L-tryptophan in the presence of S-adenosyl-L-methionine, resulting in the formation of 4-dimethylallyl-L-abrine. The catalase easC and the FAD-dependent oxidoreductase easE then transform 4-dimethylallyl-L-abrine to chanoclavine-I which is further oxidized by easD in the presence of NAD(+), resulting in the formation of chanoclavine-I aldehyde. Agroclavine dehydrogenase easG then mediates the conversion of chanoclavine-I aldehyde to agroclavine via a non-enzymatic adduct reaction: the substrate is an iminium intermediate that is formed spontaneously from chanoclavine-I aldehyde in the presence of glutathione. Further conversion of agroclavine to paspalic acid is a two-step process involving oxidation of agroclavine to elymoclavine and of elymoclavine to paspalic acid, the second step being performed by the elymoclavine oxidase cloA. However, cloA does not encode a functional enzyme indicating that C.fusiformis terminates its ergot alkaloid pathway at elymoclavine. This chain is Catalase easC, found in Claviceps fusiformis (Ergot fungus).